Here is a 215-residue protein sequence, read N- to C-terminus: Adenylate kinase (215 aa).

Residue glycine 10–threonine 15 coordinates ATP. Residues serine 30–valine 59 form an NMP region. AMP-binding positions include threonine 31, arginine 36, lysine 57–valine 59, glycine 85–arginine 88, and glutamine 92. Residues glycine 122 to aspartate 159 are LID. ATP contacts are provided by residues arginine 123 and threonine 132–tyrosine 133. The AMP site is built by arginine 156 and arginine 167. Glutamine 201 provides a ligand contact to ATP.

The protein belongs to the adenylate kinase family. As to quaternary structure, monomer.

It is found in the cytoplasm. The enzyme catalyses AMP + ATP = 2 ADP. It participates in purine metabolism; AMP biosynthesis via salvage pathway; AMP from ADP: step 1/1. Functionally, catalyzes the reversible transfer of the terminal phosphate group between ATP and AMP. Plays an important role in cellular energy homeostasis and in adenine nucleotide metabolism. This chain is Adenylate kinase, found in Hydrogenovibrio crunogenus (strain DSM 25203 / XCL-2) (Thiomicrospira crunogena).